The sequence spans 256 residues: Tyrosine-protein kinase-interacting protein (256 aa).

Acidic residues predominate over residues 1–14 (MANEGEEIELTEFP). A disordered region spans residues 1-49 (MANEGEEIELTEFPETEKERKDEEKLSSCSEETTNTSSSSGSDHVPVPI). Residues 1–228 (MANEGEEIEL…DLKRLENKIN (228 aa)) lie on the Cytoplasmic side of the membrane. Positions 15–26 (ETEKERKDEEKL) are enriched in basic and acidic residues. Residues 27-42 (SSCSEETTNTSSSSGS) are compositionally biased toward low complexity. Tyrosine 114 carries the post-translational modification Phosphotyrosine; by host LCK. A Phosphotyrosine; by host modification is found at tyrosine 127. The segment at 146–155 (EDLQSFLEKY) is CSKH/LBD2. Positions 162-183 (PKRDLSATWDPGMPTPPLPPRP) are disordered. Residues 174–183 (MPTPPLPPRP) form an SH3B/LBD1 region. Residues 174–183 (MPTPPLPPRP) show a composition bias toward pro residues. The helical transmembrane segment at 229-249 (VIICLVVVILAVLLLVTVLSI) threads the bilayer. The Extracellular segment spans residues 250–256 (LHIGMKS).

In terms of assembly, binds host LCK, human WDR48 and human NXF1/TAP. Forms a complex with activated LCK and STAT1 and STAT3. Post-translationally, phosphorylation on Tyr-114 acts as a docking site for the recruitment of STATs 1 and 3.

It is found in the host cell membrane. Functionally, plays a critical role in virus induced T-cell transformation. Binds to T-cell-specific tyrosine kinase LCK SH2 and SH3 domains, thereby activating its kinase activity. Once phosphorylated by host LCK, forms a complex with at least STAT 1 and 3, resulting on the phosphorylation of STAT3 and presumably STAT1, and their migration into the nucleus to induce transcription of target genes. Stimulates host ILF3/NF-AT-90 activity. Association with host NXF1/TAP transduces the signal up-regulating surface expression of adhesion molecules as well as activating NF-kappa-B activity. Acts synergistically with StpC to stimulate NF-kappa-B activity and interleukin-2 gene expression. Activation of NF-kappa-B protects lymphocytes from apoptosis, thereby facilitating viral induced cell transformation. May cause down-regulation of host LCK and cell apoptosis when stably overexpressed ex vivo. Interaction with WDR48 induce degradation of T-cell receptor in a lysosome-dependent fashion, when both proteins are overexpressed. The biological effect of this interaction remains controversial since no T-cell receptor degradation is observed in infected cells. This is Tyrosine-protein kinase-interacting protein from Saimiri sciureus (Common squirrel monkey).